A 38-amino-acid polypeptide reads, in one-letter code: Photosystem I reaction center subunit VIII (38 aa).

Residues 12–32 (WILIPIIGWLMPAVVMGLLFL) form a helical membrane-spanning segment.

The protein belongs to the PsaI family.

Its subcellular location is the cellular thylakoid membrane. Its function is as follows. May help in the organization of the PsaL subunit. This Gloeothece citriformis (strain PCC 7424) (Cyanothece sp. (strain PCC 7424)) protein is Photosystem I reaction center subunit VIII.